We begin with the raw amino-acid sequence, 1692 residues long: Fatty acid synthase alpha subunit hexA (1692 aa).

Residues 44–80 (AVEEPVDETPAPETAPERPPLSRAKTAAVKPQETAAP) are disordered. The region spanning 90-174 (LSAEEIVRAL…RVSSALLSKL (85 aa)) is the Carrier domain. Residue serine 125 is modified to O-(pantetheine 4'-phosphoryl)serine. The interval 508–746 (FAGKNILITG…IAMLMTPELV (239 aa)) is ketoreductase (KR) domain. The 483-residue stretch at 948-1430 (KEYLHEVAVE…QKGGQVVGVA (483 aa)) folds into the Ketosynthase family 3 (KS3) domain. Catalysis depends on cysteine 1135, which acts as the For beta-ketoacyl synthase activity. Residues 1263–1287 (GQAQLDKSSPSTNTTSRTSSVSLAR) are disordered. Over residues 1270–1284 (SSPSTNTTSRTSSVS) the composition is skewed to low complexity. Residues histidine 1315 and histidine 1356 each act as for beta-ketoacyl synthase activity in the active site. A Mg(2+)-binding site is contributed by aspartate 1569. Acetyl-CoA contacts are provided by residues 1569–1571 (DLV), 1615–1625 (EAVFKCLHTQT), 1639–1642 (KSDN), and 1668–1670 (ISH). Mg(2+) is bound at residue serine 1669.

The protein belongs to the thiolase-like superfamily. Fungal fatty acid synthetase subunit alpha family. In terms of assembly, [Alpha(6)beta(6)] hexamers of two multifunctional subunits (alpha and beta). Post-translationally, 4'-phosphopantetheine is transferred from CoA to a specific serine of the acyl carrier domain by the C-terminal PPT domain. This modification is essential for activity because fatty acids are bound in thioester linkage to the sulfhydryl of the prosthetic group.

The catalysed reaction is acetyl-CoA + n malonyl-CoA + 2n NADPH + 4n H(+) = a long-chain-acyl-CoA + n CoA + n CO2 + 2n NADP(+).. It catalyses the reaction a fatty acyl-[ACP] + malonyl-[ACP] + H(+) = a 3-oxoacyl-[ACP] + holo-[ACP] + CO2. It carries out the reaction a (3R)-hydroxyacyl-[ACP] + NADP(+) = a 3-oxoacyl-[ACP] + NADPH + H(+). The protein operates within mycotoxin biosynthesis. Functionally, fatty acid synthase alpha subunit; part of the fragmented gene cluster that mediates the biosynthesis of dothistromin (DOTH), a polyketide toxin very similar in structure to the aflatoxin precursor, versicolorin B. The first step of the pathway is the conversion of acetate to norsolorinic acid (NOR) and requires the fatty acid synthase subunits hexA and hexB, as well as the polyketide synthase pksA. PksA combines a hexanoyl starter unit and 7 malonyl-CoA extender units to synthesize the precursor NOR. The hexanoyl starter unit is provided to the acyl-carrier protein (ACP) domain by the fungal fatty acid synthase hexA/hexB. The second step is the conversion of NOR to averantin (AVN) and requires the norsolorinic acid ketoreductase nor1, which catalyzes the dehydration of norsolorinic acid to form (1'S)-averantin. The cytochrome P450 monooxygenase avnA then catalyzes the hydroxylation of AVN to 5'hydroxyaverantin (HAVN). The next step is performed by adhA that transforms HAVN to averufin (AVF). Averufin might then be converted to hydroxyversicolorone by cypX and avfA. Hydroxyversicolorone is further converted versiconal hemiacetal acetate (VHA) by moxY. VHA is then the substrate for the versiconal hemiacetal acetate esterase est1 to yield versiconal (VAL). Versicolorin B synthase vbsA then converts VAL to versicolorin B (VERB) by closing the bisfuran ring. Then, the activity of the versicolorin B desaturase verB leads to versicolorin A (VERA). DotB, a predicted chloroperoxidase, may perform epoxidation of the A-ring of VERA. Alternatively, a cytochrome P450, such as cypX or avnA could catalyze this step. It is also possible that another, uncharacterized, cytochrome P450 enzyme is responsible for this step. Opening of the epoxide could potentially be achieved by the epoxide hydrolase epoA. However, epoA seems not to be required for DOTH biosynthesis, but other epoxide hydrolases may have the ability to complement this hydrolysis. Alternatively, opening of the epoxide ring could be achieved non-enzymatically. The next step is the deoxygenation of ring A to yield the 5,8-dihydroxyanthraquinone which is most likely catalyzed by the NADPH dehydrogenase encoded by ver1. The last stages of DOTH biosynthesis are proposed to involve hydroxylation of the bisfuran. OrdB and norB might have oxidative roles here. An alternative possibility is that cytochrome P450 monoogenases such as avnA and cypX might perform these steps in addition to previously proposed steps. This is Fatty acid synthase alpha subunit hexA from Dothistroma septosporum (strain NZE10 / CBS 128990) (Red band needle blight fungus).